The primary structure comprises 299 residues: tRNA dimethylallyltransferase (299 aa).

11 to 18 (GPTGSGKS) contributes to the ATP binding site. 13–18 (TGSGKS) is a substrate binding site.

This sequence belongs to the IPP transferase family. Monomer. The cofactor is Mg(2+).

The enzyme catalyses adenosine(37) in tRNA + dimethylallyl diphosphate = N(6)-dimethylallyladenosine(37) in tRNA + diphosphate. Catalyzes the transfer of a dimethylallyl group onto the adenine at position 37 in tRNAs that read codons beginning with uridine, leading to the formation of N6-(dimethylallyl)adenosine (i(6)A). In Pseudarthrobacter chlorophenolicus (strain ATCC 700700 / DSM 12829 / CIP 107037 / JCM 12360 / KCTC 9906 / NCIMB 13794 / A6) (Arthrobacter chlorophenolicus), this protein is tRNA dimethylallyltransferase.